Consider the following 254-residue polypeptide: Thiazole synthase (254 aa).

Residue Lys93 is the Schiff-base intermediate with DXP of the active site. Residues Gly154, 181–182 (AG), and 203–204 (NT) each bind 1-deoxy-D-xylulose 5-phosphate.

This sequence belongs to the ThiG family. As to quaternary structure, homotetramer. Forms heterodimers with either ThiH or ThiS.

The protein localises to the cytoplasm. The catalysed reaction is [ThiS sulfur-carrier protein]-C-terminal-Gly-aminoethanethioate + 2-iminoacetate + 1-deoxy-D-xylulose 5-phosphate = [ThiS sulfur-carrier protein]-C-terminal Gly-Gly + 2-[(2R,5Z)-2-carboxy-4-methylthiazol-5(2H)-ylidene]ethyl phosphate + 2 H2O + H(+). The protein operates within cofactor biosynthesis; thiamine diphosphate biosynthesis. Functionally, catalyzes the rearrangement of 1-deoxy-D-xylulose 5-phosphate (DXP) to produce the thiazole phosphate moiety of thiamine. Sulfur is provided by the thiocarboxylate moiety of the carrier protein ThiS. In vitro, sulfur can be provided by H(2)S. The polypeptide is Thiazole synthase (Ruegeria pomeroyi (strain ATCC 700808 / DSM 15171 / DSS-3) (Silicibacter pomeroyi)).